A 92-amino-acid chain; its full sequence is Large ribosomal subunit protein eL43 (92 aa).

The C4-type zinc-finger motif lies at 39 to 60 (CSFCGKDSMKRAVVGIWSCKRC).

This sequence belongs to the eukaryotic ribosomal protein eL43 family.

This Drosophila melanogaster (Fruit fly) protein is Large ribosomal subunit protein eL43 (RpL37A).